Here is a 331-residue protein sequence, read N- to C-terminus: Anthranilate phosphoribosyltransferase (331 aa).

5-phospho-alpha-D-ribose 1-diphosphate is bound by residues G81, 84-85, S89, 91-94, 109-117, and S121; these read GD, NCST, and KHGNRAVSS. G81 is an anthranilate binding site. S93 contributes to the Mg(2+) binding site. Anthranilate is bound at residue N112. R167 provides a ligand contact to anthranilate. Mg(2+)-binding residues include D226 and E227.

The protein belongs to the anthranilate phosphoribosyltransferase family. As to quaternary structure, homodimer. Requires Mg(2+) as cofactor.

The catalysed reaction is N-(5-phospho-beta-D-ribosyl)anthranilate + diphosphate = 5-phospho-alpha-D-ribose 1-diphosphate + anthranilate. It functions in the pathway amino-acid biosynthesis; L-tryptophan biosynthesis; L-tryptophan from chorismate: step 2/5. Functionally, catalyzes the transfer of the phosphoribosyl group of 5-phosphorylribose-1-pyrophosphate (PRPP) to anthranilate to yield N-(5'-phosphoribosyl)-anthranilate (PRA). In Oleidesulfovibrio alaskensis (strain ATCC BAA-1058 / DSM 17464 / G20) (Desulfovibrio alaskensis), this protein is Anthranilate phosphoribosyltransferase.